A 957-amino-acid chain; its full sequence is MYGSARTISNLEGSPSRSPRLPRSPRLGHRRTSSGGGGGTGKTLSMENIQSLNAAYATSGPMYLSDHEGVASTTYPKGTMTLGRATNRAVYGGRVTAMGSSPNIASAGLSHTDVLSYTDQHGGLSGSSHHHHHQVPSMLRQVRDSTMLDLQAQLKELQRENDLLRKELDIKDSKLGSSMNSIKTFWSPELKKERVLRKEEAARMSVLKEQMRVSHEENQHLQLTIQALQDELRTQRDLNHLLQQESGNRGAEHFTIELTEENFRRLQAEHDRQAKELFLLRKTLEEMELRIETQKQTLNARDESIKKLLEMLQSKGLPSKSLEDDNERTRRMAEAESQVSHLEVILDQKEKENIHLREELHRRSQLQPEPAKTKALQTVIEMKDTKIASLERNIRDLEDEVQMLKANGVLNTEDREEEIKQIEVYKSHSKFMKTKIDQLKQELSKKESELLALQTKLETLSNQNSDCKQHIEVLKESLTAKEQRAAILQTEVDALRLRLEEKESFLNKKTKQLQDLTEEKGTLAGEIRDMKDMLEVKERKINVLQKKIENLQEQLRDKDKQLTNLKDRVKSLQTDSSNTDTALATLEEALSEKERIIERLKEQRERDDRERLEEIESFRKENKDLKEKVNALQAELTEKESSLIDLKEHASSLASAGLKRDSKLKSLEIAIEQKKEECNKLEAQLKKAHNIEDDSRMNPEFADRLKQLDKEASYYRDECGKAQAEVDRLLEILKEVENEKNDKDKKIAELESLTLRHMKDQNKKVANLKYNQQLEKKKNAQLLEEVRRREDSMVDNSQHLQIEELMNALEKTRQELDATKARLASTQQSLAEKEAHLANLRIERRKQLEEILEMKQEALLAAISEKDANIALLELSASKKKKTQEEVMALKREKDRLVHQLKQQTQNRMKLMADNYDEDHHHYHHHHHHHHHRSPGRSQHSNHRPSPDQDDEEGIWA.

Residues 1–13 (MYGSARTISNLEG) are compositionally biased toward polar residues. The segment at 1–44 (MYGSARTISNLEGSPSRSPRLPRSPRLGHRRTSSGGGGGTGKTL) is disordered. Low complexity predominate over residues 14–25 (SPSRSPRLPRSP). Residues Ser65 and Ser666 each carry the phosphoserine modification. Residues 140–917 (RQVRDSTMLD…RMKLMADNYD (778 aa)) are a coiled coil. The segment covering 922 to 943 (HYHHHHHHHHHRSPGRSQHSNH) has biased composition (basic residues). Residues 922 to 957 (HYHHHHHHHHHRSPGRSQHSNHRPSPDQDDEEGIWA) form a disordered region. Over residues 948–957 (DQDDEEGIWA) the composition is skewed to acidic residues.

In terms of assembly, interacts with BSN, ERC1, PPFIA1, PPFIA2, PPFIA3 and PPFIA4. Interacts through its C-terminus with the PDZ domain of RIMS1. Part of a complex consisting of ERC2, RIMS1 and UNC13A. Expressed throughout the central nervous system, including hippocampus, cortex, cerebellum and olfactory bulb.

It is found in the cytoplasm. Its subcellular location is the synapse. The protein resides in the presynaptic active zone. It localises to the cytoskeleton. Thought to be involved in the organization of the cytomatrix at the nerve terminals active zone (CAZ) which regulates neurotransmitter release. Seems to act together with BSN. May recruit liprin-alpha proteins to the CAZ. This chain is ERC protein 2 (Erc2), found in Mus musculus (Mouse).